We begin with the raw amino-acid sequence, 202 residues long: Thymidylate kinase (202 aa).

Residue 7–14 (GIDGSGKT) participates in ATP binding.

This sequence belongs to the thymidylate kinase family.

The enzyme catalyses dTMP + ATP = dTDP + ADP. Phosphorylation of dTMP to form dTDP in both de novo and salvage pathways of dTTP synthesis. This Ehrlichia canis (strain Jake) protein is Thymidylate kinase.